A 369-amino-acid polypeptide reads, in one-letter code: UDP-N-acetylglucosamine--N-acetylmuramyl-(pentapeptide) pyrophosphoryl-undecaprenol N-acetylglucosamine transferase (369 aa).

Residues 16–18, asparagine 130, arginine 171, serine 196, and glutamine 297 each bind UDP-N-acetyl-alpha-D-glucosamine; that span reads TGG.

Belongs to the glycosyltransferase 28 family. MurG subfamily.

The protein resides in the cell inner membrane. The catalysed reaction is di-trans,octa-cis-undecaprenyl diphospho-N-acetyl-alpha-D-muramoyl-L-alanyl-D-glutamyl-meso-2,6-diaminopimeloyl-D-alanyl-D-alanine + UDP-N-acetyl-alpha-D-glucosamine = di-trans,octa-cis-undecaprenyl diphospho-[N-acetyl-alpha-D-glucosaminyl-(1-&gt;4)]-N-acetyl-alpha-D-muramoyl-L-alanyl-D-glutamyl-meso-2,6-diaminopimeloyl-D-alanyl-D-alanine + UDP + H(+). Its pathway is cell wall biogenesis; peptidoglycan biosynthesis. Cell wall formation. Catalyzes the transfer of a GlcNAc subunit on undecaprenyl-pyrophosphoryl-MurNAc-pentapeptide (lipid intermediate I) to form undecaprenyl-pyrophosphoryl-MurNAc-(pentapeptide)GlcNAc (lipid intermediate II). This chain is UDP-N-acetylglucosamine--N-acetylmuramyl-(pentapeptide) pyrophosphoryl-undecaprenol N-acetylglucosamine transferase, found in Desulfotalea psychrophila (strain LSv54 / DSM 12343).